Here is a 350-residue protein sequence, read N- to C-terminus: Protein CONSERVED ONLY IN THE GREEN LINEAGE 160, chloroplastic (350 aa).

Residues 1–46 (MAILSYISATSTTPPIPQDQSPNSRLPTKIILPNKKPEKWSTGVAP) constitute a chloroplast transit peptide. Over residues 7–26 (ISATSTTPPIPQDQSPNSRL) the composition is skewed to polar residues. The disordered stretch occupies residues 7-58 (ISATSTTPPIPQDQSPNSRLPTKIILPNKKPEKWSTGVAPGEYGGPPTTTKL). S117 carries the phosphoserine modification. The next 4 helical transmembrane spans lie at 213 to 233 (KNKI…SAYI), 239 to 259 (IALS…MLGN), 276 to 296 (ANQP…RWNA), and 304 to 324 (FMHL…IATF).

It is found in the plastid. The protein localises to the chloroplast thylakoid membrane. In terms of biological role, facilitates the assembly of the membrane proton channel of the chloroplastic F-type ATPase. Specifically required for the efficient assembly and integration of the CF(0) subunit c into the chloroplastic ATPase complex in the thylakoid membrane. This chain is Protein CONSERVED ONLY IN THE GREEN LINEAGE 160, chloroplastic, found in Arabidopsis thaliana (Mouse-ear cress).